Reading from the N-terminus, the 334-residue chain is Probable quinone oxidoreductase (334 aa).

Belongs to the zinc-containing alcohol dehydrogenase family. Quinone oxidoreductase subfamily.

The catalysed reaction is 2 a quinone + NADPH + H(+) = 2 a 1,4-benzosemiquinone + NADP(+). This Saccharomyces cerevisiae (strain ATCC 204508 / S288c) (Baker's yeast) protein is Probable quinone oxidoreductase (ZTA1).